Reading from the N-terminus, the 258-residue chain is Archaerhodopsin-3 (258 aa).

A propeptide spanning residues 1 to 6 (MDPIAL) is cleaved from the precursor. Gln-7 carries the post-translational modification Pyrrolidone carboxylic acid. Residues 7-18 (QAGYDLLGDGRP) are Extracellular-facing. A helical transmembrane segment spans residues 19–40 (ETLWLGIGTLLMLIGTFYFLVR). Residues 41-49 (GWGVTDKDA) lie on the Cytoplasmic side of the membrane. A helical transmembrane segment spans residues 50 to 71 (REYYAVTILVPGIASAAYLSMF). The Extracellular portion of the chain corresponds to 72 to 89 (FGIGLTEVTVGGEMLDIY). Residues 90-111 (YARYADWLFTTPLLLLDLALLA) traverse the membrane as a helical segment. Topologically, residues 112-114 (KVD) are cytoplasmic. The chain crosses the membrane as a helical span at residues 115–137 (RVTIGTLVGVDALMIVTGLIGAL). Over 138–141 (SHTA) the chain is Extracellular. Residues 142-170 (IARYSWWLFSTICMIVVLYFLATSLRSAA) traverse the membrane as a helical segment. At 171–173 (KER) the chain is on the cytoplasmic side. A helical membrane pass occupies residues 174–202 (GPEVASTFNTLTALVLVLWTAYPILWIIG). Topologically, residues 203–210 (TEGAGVVG) are extracellular. The helical transmembrane segment at 211–243 (LGIETLLFMVLDVTAKVGFGFILLRSRAILGDT) threads the bilayer. Lys-226 carries the post-translational modification N6-(retinylidene)lysine. The Cytoplasmic portion of the chain corresponds to 244–258 (EAPEPSAGADVSAAD).

Belongs to the archaeal/bacterial/fungal opsin family.

The protein localises to the cell membrane. Its function is as follows. Light-driven proton pump. The protein is Archaerhodopsin-3 (aop3) of Halorubrum sodomense.